Reading from the N-terminus, the 81-residue chain is CLAVATA3/ESR (CLE)-related protein 6 (81 aa).

An N-terminal signal peptide occupies residues 1 to 26 (MANLILKQSLIILLIIYSTPILSSQA). Hydroxyproline occurs at positions 73 and 76. Residue Pro76 is glycosylated (O-linked (Ara...) hydroxyproline).

The protein belongs to the CLV3/ESR signal peptide family. Post-translationally, the O-glycosylation (arabinosylation) of the hydroxyproline Pro-76 enhances binding affinity of the CLE6p peptide for its receptor. Mostly expressed in roots, seedlings, stems and flowers, and, to a lower extent, in apex and siliques.

It localises to the secreted. The protein resides in the extracellular space. Extracellular signal peptide that regulates cell fate. The sequence is that of CLAVATA3/ESR (CLE)-related protein 6 from Arabidopsis thaliana (Mouse-ear cress).